The sequence spans 225 residues: UPF0758 protein Shewmr4_3597 (225 aa).

The 123-residue stretch at 102–224 (VLTNPDLTRD…IVSFAERGWI (123 aa)) folds into the MPN domain. Zn(2+) is bound by residues His173, His175, and Asp186. The JAMM motif motif lies at 173-186 (HNHPSGIAEPSQAD).

Belongs to the UPF0758 family.

This is UPF0758 protein Shewmr4_3597 from Shewanella sp. (strain MR-4).